The following is a 605-amino-acid chain: FAD-linked oxidoreductase easE (605 aa).

The signal sequence occupies residues 1–20; that stretch reads MRHFVTFVVGFLLSWGFLSS. N-linked (GlcNAc...) asparagine glycosylation is found at asparagine 46 and asparagine 105. The 186-residue stretch at 122–307 folds into the FAD-binding PCMH-type domain; sequence CHQGRLPLYS…TQATVRAFPD (186 aa). An N-linked (GlcNAc...) asparagine glycan is attached at asparagine 370.

This sequence belongs to the oxygen-dependent FAD-linked oxidoreductase family. FAD is required as a cofactor.

The protein operates within alkaloid biosynthesis; ergot alkaloid biosynthesis. Its function is as follows. FAD-linked oxidoreductase; part of the gene cluster that mediates the biosynthesis of fungal ergot alkaloid ergovaline, the predominant ergopeptine product in E.festucae var. lolii. DmaW catalyzes the first step of ergot alkaloid biosynthesis by condensing dimethylallyl diphosphate (DMAP) and tryptophan to form 4-dimethylallyl-L-tryptophan. The second step is catalyzed by the methyltransferase easF that methylates 4-dimethylallyl-L-tryptophan in the presence of S-adenosyl-L-methionine, resulting in the formation of 4-dimethylallyl-L-abrine. The catalase easC and the FAD-dependent oxidoreductase easE then transform 4-dimethylallyl-L-abrine to chanoclavine-I which is further oxidized by easD in the presence of NAD(+), resulting in the formation of chanoclavine-I aldehyde. Agroclavine dehydrogenase easG then mediates the conversion of chanoclavine-I aldehyde to agroclavine via a non-enzymatic adduct reaction: the substrate is an iminium intermediate that is formed spontaneously from chanoclavine-I aldehyde in the presence of glutathione. The presence of easA is not required to complete this reaction. Further conversion of agroclavine to paspalic acid is a two-step process involving oxidation of agroclavine to elymoclavine and of elymoclavine to paspalic acid, the second step being performed by the elymoclavine oxidase cloA. Paspalic acid is then further converted to D-lysergic acid. Ergovaline is assembled from D-lysergic acid and three different amino acids by the D-lysergyl-peptide-synthetase composed of a monomudular (lpsB) and a trimodular (lpsA) nonribosomal peptide synthetase subunit. The sequence is that of FAD-linked oxidoreductase easE from Epichloe festucae var. lolii (Neotyphodium lolii).